Consider the following 96-residue polypeptide: UPF0235 protein SO_3356 (96 aa).

Belongs to the UPF0235 family.

The polypeptide is UPF0235 protein SO_3356 (Shewanella oneidensis (strain ATCC 700550 / JCM 31522 / CIP 106686 / LMG 19005 / NCIMB 14063 / MR-1)).